A 513-amino-acid polypeptide reads, in one-letter code: Na(+)/H(+) antiporter NhaB (513 aa).

A run of 12 helical transmembrane segments spans residues 23–43, 52–72, 97–117, 120–140, 144–164, 202–222, 238–258, 303–323, 348–368, 391–411, 447–467, and 475–495; these read LALI…PFVA, IFTL…LLAI, LLLM…LFIF, LLLS…AAAF, FLDA…FYGI, LMMH…VGEP, FFLR…LTCL, AIIG…VGLI, TESL…AVII, LFYI…VGTI, ATPN…APLI, and VWMA…CVEF.

This sequence belongs to the NhaB Na(+)/H(+) (TC 2.A.34) antiporter family.

It localises to the cell inner membrane. It catalyses the reaction 2 Na(+)(in) + 3 H(+)(out) = 2 Na(+)(out) + 3 H(+)(in). Na(+)/H(+) antiporter that extrudes sodium in exchange for external protons. The protein is Na(+)/H(+) antiporter NhaB of Escherichia coli O45:K1 (strain S88 / ExPEC).